A 752-amino-acid polypeptide reads, in one-letter code: Pentatricopeptide repeat-containing protein At5g13270, chloroplastic (752 aa).

The N-terminal 80 residues, 1-80 (MTILTVQSSF…LQEMDKAGVS (80 aa)), are a transit peptide targeting the chloroplast. PPR repeat units lie at residues 47–81 (QGQVENLHLVSLSKHRKLNEAFEFLQEMDKAGVSV), 82–116 (SSYSYQCLFEACRELRSLSHGRLLHDRMRMGIENP), 117–147 (SVLLQNCVLQMYCECRSLEDADKLFDEMSEL), 148–182 (NAVSRTTMISAYAEQGILDKAVGLFSGMLASGDKP), 183–217 (PSSMYTTLLKSLVNPRALDFGRQIHAHVIRAGLCS), 218–248 (NTSIETGIVNMYVKCGWLVGAKRVFDQMAVK), 249–283 (KPVACTGLMVGYTQAGRARDALKLFVDLVTEGVEW), 284–318 (DSFVFSVVLKACASLEELNLGKQIHACVAKLGLES), 319–349 (EVSVGTPLVDFYIKCSSFESACRAFQEIREP), 350–384 (NDVSWSAIISGYCQMSQFEEAVKTFKSLRSKNASI), 386–420 (NSFTYTSIFQACSVLADCNIGGQVHADAIKRSLIG), 421–451 (SQYGESALITMYSKCGCLDDANEVFESMDNP), 452–486 (DIVAWTAFISGHAYYGNASEALRLFEKMVSCGMKP), 487–522 (NSVTFIAVLTACSHAGLVEQGKHCLDTMLRKYNVAP), and 523–553 (TIDHYDCMIDIYARSGLLDEALKFMKNMPFE). The segment at 558-633 (SWKCFLSGCW…ELSCSWIQEK (76 aa)) is type E motif. The segment at 634–664 (GKIHRFIVGDKHHPQTQEIYEKLKEFDGFME) is type E(+) motif. The segment at 665-752 (GDMFQCNMTE…EGKCSCNDYW (88 aa)) is type DYW motif.

It belongs to the PPR family. PCMP-H subfamily.

Its subcellular location is the plastid. The protein localises to the chloroplast. This is Pentatricopeptide repeat-containing protein At5g13270, chloroplastic (PCMP-H90) from Arabidopsis thaliana (Mouse-ear cress).